The chain runs to 221 residues: Putative 3-methyladenine DNA glycosylase (221 aa).

Belongs to the DNA glycosylase MPG family.

This is Putative 3-methyladenine DNA glycosylase from Herpetosiphon aurantiacus (strain ATCC 23779 / DSM 785 / 114-95).